Consider the following 232-residue polypeptide: Octanoyltransferase (232 aa).

In terms of domain architecture, BPL/LPL catalytic spans 44-219 (EHTADEVWVV…QLARQFGLVL (176 aa)). Substrate-binding positions include 83 to 90 (RGGQVTYH), 150 to 152 (ALG), and 163 to 165 (GLS). Catalysis depends on Cys-181, which acts as the Acyl-thioester intermediate.

Belongs to the LipB family.

The protein resides in the cytoplasm. It catalyses the reaction octanoyl-[ACP] + L-lysyl-[protein] = N(6)-octanoyl-L-lysyl-[protein] + holo-[ACP] + H(+). It participates in protein modification; protein lipoylation via endogenous pathway; protein N(6)-(lipoyl)lysine from octanoyl-[acyl-carrier-protein]: step 1/2. Its function is as follows. Catalyzes the transfer of endogenously produced octanoic acid from octanoyl-acyl-carrier-protein onto the lipoyl domains of lipoate-dependent enzymes. Lipoyl-ACP can also act as a substrate although octanoyl-ACP is likely to be the physiological substrate. The polypeptide is Octanoyltransferase (Xanthomonas euvesicatoria pv. vesicatoria (strain 85-10) (Xanthomonas campestris pv. vesicatoria)).